The chain runs to 136 residues: Non-structural protein 1 (136 aa).

The protein belongs to the pneumovirus non-structural protein 1 family. As to quaternary structure, monomer. Homomultimer. Heteromultimer with NS2. Interacts with the matrix protein M. Interacts with host ELOC and CUL2; this interaction allows NS1 to form an active E3 ligase with ELOC and CUL2. Interacts with host IRF3; this interaction leads to the disrupted association of IRF3 with CREBBP and thus reduced binding of IRF3 to the IFN-beta promoter. Interacts with host MAVS; this interaction prevents MAVS binding to RIGI and inhibits signaling pathway leading to interferon production. Interacts with host TRIM25 (via SPRY domain); this interaction suppresses RIGI ubiquitination and results in decreased interaction between RIGI and MAVS.

It is found in the host cytoplasm. It localises to the host mitochondrion. The protein localises to the host nucleus. Functionally, plays a major role in antagonizing the type I IFN-mediated antiviral response by degrading or inhibiting multiple cellular factors required for either IFN induction or response pathways. Acts cooperatively with NS2 to repress activation and nuclear translocation of host IFN-regulatory factor IRF3. Also disrupts the association of IRF3 with CREBBP. Interacts with host mitochondrial-associated membrane (MAM) MAVS and prevents the interaction with RIGI. Interacts with TRIM25 to suppress TRIM25-mediated RIGI ubiquitination and thereby RIGI-MAVS interaction. Together with NS2, participates in the proteasomal degradation of host STAT2, IRF3, IRF7, TBK1 and RIGI through a NS-degradasome involving CUL2 and Elongin-C. The degradasome requires an intact mitochondrial MAVS. Decreases the levels of host TRAF3 and IKBKE/IKK-epsilon. As functions other than disruptions of the type I IFN-mediated antiviral signaling pathways, induces host SOCS1 and SOCS3 expression. Suppresses premature apoptosis by an NF-kappa-B-dependent, interferon-independent mechanism and thus facilitates virus growth. Additionally, NS1 may serve some inhibitory role in viral transcription and RNA replication. Suppresses proliferation and activation of host CD103+ CD8+ cytotoxic T-lymphocytes and Th17 helper T-lymphocytes. This chain is Non-structural protein 1 (1C), found in Ovis aries (Sheep).